A 407-amino-acid chain; its full sequence is Methylthioribose kinase (407 aa).

ATP contacts are provided by residues N40, K57, and 111–113 (EDL). A substrate-binding site is contributed by D229. ATP is bound at residue 246 to 248 (DAE). R344 contributes to the substrate binding site.

Belongs to the methylthioribose kinase family. As to quaternary structure, homodimer.

It catalyses the reaction 5-(methylsulfanyl)-D-ribose + ATP = 5-(methylsulfanyl)-alpha-D-ribose 1-phosphate + ADP + H(+). The protein operates within amino-acid biosynthesis; L-methionine biosynthesis via salvage pathway; S-methyl-5-thio-alpha-D-ribose 1-phosphate from S-methyl-5'-thioadenosine (hydrolase route): step 2/2. Catalyzes the phosphorylation of methylthioribose into methylthioribose-1-phosphate. In Yersinia pseudotuberculosis serotype O:3 (strain YPIII), this protein is Methylthioribose kinase.